A 485-amino-acid polypeptide reads, in one-letter code: NADH-quinone oxidoreductase subunit N (485 aa).

A run of 14 helical transmembrane segments spans residues leucine 8 to isoleucine 28, phenylalanine 35 to valine 55, glycine 71 to alanine 91, phenylalanine 105 to leucine 125, alanine 127 to phenylalanine 147, tyrosine 159 to alanine 179, leucine 203 to phenylalanine 223, proline 235 to methionine 255, valine 271 to glutamine 291, leucine 297 to glutamine 317, valine 326 to leucine 346, alanine 373 to isoleucine 393, tryptophan 408 to valine 430, and isoleucine 455 to isoleucine 475.

The protein belongs to the complex I subunit 2 family. As to quaternary structure, NDH-1 is composed of 13 different subunits. Subunits NuoA, H, J, K, L, M, N constitute the membrane sector of the complex.

It is found in the cell inner membrane. It catalyses the reaction a quinone + NADH + 5 H(+)(in) = a quinol + NAD(+) + 4 H(+)(out). In terms of biological role, NDH-1 shuttles electrons from NADH, via FMN and iron-sulfur (Fe-S) centers, to quinones in the respiratory chain. The immediate electron acceptor for the enzyme in this species is believed to be ubiquinone. Couples the redox reaction to proton translocation (for every two electrons transferred, four hydrogen ions are translocated across the cytoplasmic membrane), and thus conserves the redox energy in a proton gradient. The protein is NADH-quinone oxidoreductase subunit N of Salmonella choleraesuis (strain SC-B67).